The primary structure comprises 111 residues: CRIB domain-containing protein RIC2 (111 aa).

Residues Ile-71–Gly-84 form the CRIB domain.

In terms of assembly, interacts with ARAC11/ROP1. Expressed in roots, leaves, stems, flowers, siliques and pollen.

The protein resides in the cell membrane. Functions as a downstream effector of Rho-related GTP binding proteins of the 'Rho of Plants' (ROPs) family. Participates in the propagation of ROP GTPase signals in specific cellular responses. Is involved in pollen tube growth regulation through its interaction with ARAC11/ROP1. The protein is CRIB domain-containing protein RIC2 (RIC2) of Arabidopsis thaliana (Mouse-ear cress).